A 95-amino-acid polypeptide reads, in one-letter code: Large ribosomal subunit protein bL28 (95 aa).

A disordered region spans residues 1–22 (MSRRCELTGKGPMTGNNVSHAN).

Belongs to the bacterial ribosomal protein bL28 family.

The chain is Large ribosomal subunit protein bL28 from Ruegeria pomeroyi (strain ATCC 700808 / DSM 15171 / DSS-3) (Silicibacter pomeroyi).